The following is a 728-amino-acid chain: Beta-porphyranase A (728 aa).

A signal peptide spans 1–22 (MSYKYIFLLSAFTLGVPPGIYC). Substrate contacts are provided by H53, K76, W78, K87, H114, and N151. The active-site Proton donor is E152. The substrate site is built by H235, E279, S326, and W331. Residue E279 is the Nucleophile of the active site. The CBM-cenC domain maps to 599-701 (TLQNGTFSEG…AVSFDFNSTV (103 aa)).

This sequence belongs to the glycosyl hydrolase 86 family.

The enzyme catalyses Hydrolysis of beta-D-galactopyranose-(1-&gt;4)-alpha-L-galactopyranose-6-sulfate linkages in porphyran.. Cleaves the sulfated polysaccharide porphyran at the (1-&gt;4) linkages between beta-D-galactopyranose and alpha-L-galactopyranose-6-sulfate, forming mostly the disaccharide alpha-L-galactopyranose-6-sulfate-(1-&gt;3)-beta-D-galactose. Some longer oligosaccharides of even number of residues are also observed. Inactive on the non-sulfated agarose portion of the porphyran backbone. Can also use methylated galactoses. The sequence is that of Beta-porphyranase A from Phocaeicola plebeius (strain DSM 17135 / JCM 12973 / CCUG 54634 / M2) (Bacteroides plebeius).